A 337-amino-acid polypeptide reads, in one-letter code: Ornithine carbamoyltransferase, catabolic (337 aa).

Carbamoyl phosphate-binding positions include 58–61, Q85, R109, and 135–138; these read STRT and HPTQ. Residues N167, D231, and 235–236 contribute to the L-ornithine site; that span reads SM. Residues 272-273 and R317 each bind carbamoyl phosphate; that span reads CL.

Belongs to the aspartate/ornithine carbamoyltransferase superfamily. OTCase family.

The protein localises to the cytoplasm. It catalyses the reaction carbamoyl phosphate + L-ornithine = L-citrulline + phosphate + H(+). The protein operates within amino-acid degradation; L-arginine degradation via ADI pathway; carbamoyl phosphate from L-arginine: step 2/2. Reversibly catalyzes the transfer of the carbamoyl group from carbamoyl phosphate (CP) to the N(epsilon) atom of ornithine (ORN) to produce L-citrulline. This is Ornithine carbamoyltransferase, catabolic (arcB) from Latilactobacillus sakei (Lactobacillus sakei).